A 456-amino-acid chain; its full sequence is Bifunctional protein GlmU (456 aa).

The tract at residues 1-229 (MLNNAMSVVI…LSEVEGVNNR (229 aa)) is pyrophosphorylase. Residues 11–14 (LAAG), Lys25, Gln76, 81–82 (GT), 103–105 (YGD), Gly140, Glu154, Asn169, and Asn227 contribute to the UDP-N-acetyl-alpha-D-glucosamine site. A Mg(2+)-binding site is contributed by Asp105. Residue Asn227 coordinates Mg(2+). The segment at 230–250 (LQLSRLERVYQSEQAEKLLLA) is linker. The interval 251 to 456 (GVMLRDPARF…EGWRRPVKKK (206 aa)) is N-acetyltransferase. UDP-N-acetyl-alpha-D-glucosamine contacts are provided by Arg333 and Lys351. His363 acts as the Proton acceptor in catalysis. Residues Tyr366 and Asn377 each coordinate UDP-N-acetyl-alpha-D-glucosamine. Acetyl-CoA is bound by residues Ala380, 386–387 (NY), Ser405, Ala423, and Arg440.

This sequence in the N-terminal section; belongs to the N-acetylglucosamine-1-phosphate uridyltransferase family. In the C-terminal section; belongs to the transferase hexapeptide repeat family. Homotrimer. Mg(2+) is required as a cofactor.

It is found in the cytoplasm. The enzyme catalyses alpha-D-glucosamine 1-phosphate + acetyl-CoA = N-acetyl-alpha-D-glucosamine 1-phosphate + CoA + H(+). It catalyses the reaction N-acetyl-alpha-D-glucosamine 1-phosphate + UTP + H(+) = UDP-N-acetyl-alpha-D-glucosamine + diphosphate. Its pathway is nucleotide-sugar biosynthesis; UDP-N-acetyl-alpha-D-glucosamine biosynthesis; N-acetyl-alpha-D-glucosamine 1-phosphate from alpha-D-glucosamine 6-phosphate (route II): step 2/2. The protein operates within nucleotide-sugar biosynthesis; UDP-N-acetyl-alpha-D-glucosamine biosynthesis; UDP-N-acetyl-alpha-D-glucosamine from N-acetyl-alpha-D-glucosamine 1-phosphate: step 1/1. It participates in bacterial outer membrane biogenesis; LPS lipid A biosynthesis. Functionally, catalyzes the last two sequential reactions in the de novo biosynthetic pathway for UDP-N-acetylglucosamine (UDP-GlcNAc). The C-terminal domain catalyzes the transfer of acetyl group from acetyl coenzyme A to glucosamine-1-phosphate (GlcN-1-P) to produce N-acetylglucosamine-1-phosphate (GlcNAc-1-P), which is converted into UDP-GlcNAc by the transfer of uridine 5-monophosphate (from uridine 5-triphosphate), a reaction catalyzed by the N-terminal domain. The protein is Bifunctional protein GlmU of Shigella boydii serotype 18 (strain CDC 3083-94 / BS512).